Consider the following 89-residue polypeptide: Cell division protein ZapA (89 aa).

This sequence belongs to the ZapA family. Type 2 subfamily. Homodimer. Interacts with FtsZ.

It is found in the cytoplasm. Its function is as follows. Activator of cell division through the inhibition of FtsZ GTPase activity, therefore promoting FtsZ assembly into bundles of protofilaments necessary for the formation of the division Z ring. It is recruited early at mid-cell but it is not essential for cell division. This chain is Cell division protein ZapA, found in Bacillus thuringiensis (strain Al Hakam).